A 301-amino-acid polypeptide reads, in one-letter code: 2-dehydropantoate 2-reductase (301 aa).

NADP(+) is bound by residues G7 to G12, K74, N99, and A123. The active-site Proton donor is K179. Residues K179, N183, N187, N197, and N246–S249 contribute to the substrate site. E261 is a binding site for NADP(+).

It belongs to the ketopantoate reductase family.

It localises to the cytoplasm. The catalysed reaction is (R)-pantoate + NAD(+) = 2-dehydropantoate + NADH + H(+). It catalyses the reaction (R)-pantoate + NADP(+) = 2-dehydropantoate + NADPH + H(+). The protein operates within cofactor biosynthesis; coenzyme A biosynthesis. In terms of biological role, catalyzes the NAD(P)H-dependent reduction of ketopantoate into pantoic acid. This is 2-dehydropantoate 2-reductase from Pyrococcus horikoshii (strain ATCC 700860 / DSM 12428 / JCM 9974 / NBRC 100139 / OT-3).